A 558-amino-acid polypeptide reads, in one-letter code: Protein NRT1/ PTR FAMILY 2.3 (558 aa).

The next 12 membrane-spanning stretches (helical) occupy residues 33 to 53, 69 to 89, 92 to 112, 128 to 148, 176 to 196, 203 to 223, 329 to 349, 371 to 391, 403 to 423, 439 to 459, 478 to 498, and 517 to 537; these read TLLGLSVTSFGWVMNLIVFLI, VANGCLSMLPVVAAILADSFF, IPVIAASSFISLLGIVLLTLI, VLCTPPSKLHLGILYTALALV, FFNWYFLTLYAGAITGATAIV, SWKLGFGLCAAANLISFIVFV, LWLSIIFVSTPMVMQTSLIVL, VIIIITACIVIIMNNWLVFPM, LQKVGIGQVLTILSMALSAVV, VLWLFPPLVIVGIGEAFQFPA, SLTSVVIGISFYLSTALIDLI, and VYWLLVIGGILNFGYFLVCSW.

This sequence belongs to the major facilitator superfamily. Proton-dependent oligopeptide transporter (POT/PTR) (TC 2.A.17) family. In terms of tissue distribution, expressed in flowers, siliques and root epidermis or cortex. Detected in shoots.

The protein resides in the membrane. Transporter involved in a passive nitrate efflux. This Arabidopsis thaliana (Mouse-ear cress) protein is Protein NRT1/ PTR FAMILY 2.3 (NPF2.3).